The sequence spans 537 residues: Eukaryotic translation initiation factor 3 subunit L (537 aa).

The PCI domain maps to 301–513; that stretch reads TFSSILLYIQ…IHIADTKVSH (213 aa).

Belongs to the eIF-3 subunit L family. As to quaternary structure, component of the eukaryotic translation initiation factor 3 (eIF-3) complex.

It is found in the cytoplasm. Functionally, component of the eukaryotic translation initiation factor 3 (eIF-3) complex, which is involved in protein synthesis of a specialized repertoire of mRNAs and, together with other initiation factors, stimulates binding of mRNA and methionyl-tRNAi to the 40S ribosome. The eIF-3 complex specifically targets and initiates translation of a subset of mRNAs involved in cell proliferation. This is Eukaryotic translation initiation factor 3 subunit L from Aedes aegypti (Yellowfever mosquito).